Reading from the N-terminus, the 77-residue chain is Large ribosomal subunit protein bL28 (77 aa).

Belongs to the bacterial ribosomal protein bL28 family.

This is Large ribosomal subunit protein bL28 from Acidovorax ebreus (strain TPSY) (Diaphorobacter sp. (strain TPSY)).